Here is a 494-residue protein sequence, read N- to C-terminus: Amidophosphoribosyltransferase (494 aa).

Residues 1-10 (MFNYSGLNEE) constitute a propeptide that is removed on maturation. Catalysis depends on Cys-11, which acts as the Nucleophile. The Glutamine amidotransferase type-2 domain occupies 11–231 (CGVFGIWNHP…AGEYVVINDK (221 aa)). Mg(2+) contacts are provided by Ser-294, Asp-356, and Asp-357.

In the C-terminal section; belongs to the purine/pyrimidine phosphoribosyltransferase family. Requires Mg(2+) as cofactor.

The catalysed reaction is 5-phospho-beta-D-ribosylamine + L-glutamate + diphosphate = 5-phospho-alpha-D-ribose 1-diphosphate + L-glutamine + H2O. It functions in the pathway purine metabolism; IMP biosynthesis via de novo pathway; N(1)-(5-phospho-D-ribosyl)glycinamide from 5-phospho-alpha-D-ribose 1-diphosphate: step 1/2. In terms of biological role, catalyzes the formation of phosphoribosylamine from phosphoribosylpyrophosphate (PRPP) and glutamine. This Staphylococcus aureus (strain COL) protein is Amidophosphoribosyltransferase.